A 331-amino-acid polypeptide reads, in one-letter code: Cathepsin 7 (331 aa).

Positions 1–17 are cleaved as a signal peptide; sequence MTPTVFLSILCLGVALA. A propeptide spans 18 to 111 (activation peptide); sequence APAPDYNLDA…GKHIQKRNPK (94 aa). The Nuclear localization signal signature appears at 33–50; it reads KRSNDRTYSPEEEKQRRA. N-linked (GlcNAc...) asparagine glycosylation is present at Asn-72. 3 cysteine pairs are disulfide-bonded: Cys-133/Cys-176, Cys-167/Cys-209, and Cys-267/Cys-320. Residue Cys-136 is part of the active site. Residues His-274 and Asn-298 contribute to the active site.

This sequence belongs to the peptidase C1 family. As to expression, expressed in placenta. Expressed in parietal and spiral artery-associated trophoblast giant cells, most abundantly during the phase of trophoblast invasion. From 14.5 dpc onwards, expressed at lower levels in labyrinth trophoblast cells. Expressed in trophoblast stem cells. Expressed in heart, liver and testis.

Its subcellular location is the endosome. The protein localises to the lysosome. It localises to the cytoplasm. The protein resides in the perinuclear region. It is found in the golgi apparatus. Its subcellular location is the nucleus. The protein localises to the secreted. It localises to the extracellular space. In terms of biological role, involved in trophoblast cell proliferation and differentiation probably by affecting mitotic cell cycle progression. Proteolytic activity and nuclear localization are essential for its role in cell cycle progression. In Mus musculus (Mouse), this protein is Cathepsin 7.